Consider the following 620-residue polypeptide: MGKVIGIDLGTTNSAMAVYEGNEAKIIANKEGKNTTPSIVAFTDKGEILVGESAKRQAVTNPEKTIYSIKRIMGLMFNEDKAKEAEKRLPYKIVDRNGACAIEISGKVYTPQEISAKILMKLKEDAESYLGESVTEAVITVPAYFNDSQRKATKEAGTIAGLNVLRIINEPTSAALAYGLDKKESEKIMVYDLGGGTFDVTVLETGDNVVEVLATGGDAFLGGDDFDNRVIDFLASEFKSETGIEIKNDVMALQRLKEAAENAKKELSSAMETEINLPFITADATGPKHLVKKLTRAKFESLTEDLVEETISKIESVIKDAGLTKNEISEVVMVGGSTRIPKVQERVKAFINKDLNKSVNPDEVVAVGASIQGGVLKGDVKDVLLLDVTPLSLGIETLGGVMTKVIDRGTTIPAKKSQVFSTAEDNQPAVSIMVLQGERELARDNKSLGKFDLQGIAPAPRGVPQIEVTFDIDANGILTVSAQDKNTGKSQEIKISGSSGLSDSEIEKMVKDAELHKEEDARKKEVIEARNHADSLAHQTQKSLDEHKTNLNENDANEIQNAINALKECVKNDNATKAELEDKTKLLAQAAQKLGEAMANKNNAEQPKKKDDDVIDAEVE.

T197 is subject to Phosphothreonine; by autocatalysis. Positions 597–620 (AMANKNNAEQPKKKDDDVIDAEVE) are disordered.

Belongs to the heat shock protein 70 family.

Its function is as follows. Acts as a chaperone. This chain is Chaperone protein DnaK, found in Helicobacter pylori (strain Shi470).